Reading from the N-terminus, the 102-residue chain is Large ribosomal subunit protein uL23 (102 aa).

Belongs to the universal ribosomal protein uL23 family. Part of the 50S ribosomal subunit. Contacts protein L29, and trigger factor when it is bound to the ribosome.

In terms of biological role, one of the early assembly proteins it binds 23S rRNA. One of the proteins that surrounds the polypeptide exit tunnel on the outside of the ribosome. Forms the main docking site for trigger factor binding to the ribosome. The polypeptide is Large ribosomal subunit protein uL23 (Methylobacillus flagellatus (strain ATCC 51484 / DSM 6875 / VKM B-1610 / KT)).